The sequence spans 515 residues: Protein disulfide-isomerase (515 aa).

The signal sequence occupies residues 1–22; the sequence is MAVVRVRAIVALLCLVAALGLA. Thioredoxin domains lie at 23 to 139 and 351 to 480; these read EPLE…KRTG and FLEG…SGGQ. Residues Cys-58, Cys-61, Cys-402, and Cys-405 each act as nucleophile in the active site. 2 cysteine pairs are disulfide-bonded: Cys-58–Cys-61 and Cys-402–Cys-405. The segment at 477–515 is disordered; it reads SGGQDGAAADDDLEDLETDEETDLEEGDDDEQKIQKDEL. Acidic residues predominate over residues 484–507; the sequence is AADDDLEDLETDEETDLEEGDDDE. The Prevents secretion from ER motif lies at 512–515; that stretch reads KDEL.

The protein belongs to the protein disulfide isomerase family. As to quaternary structure, heterodimer; heterodimerizes with the protein microsomal triglyceride transfer MTTP. Homodimer. Monomers and homotetramers may also occur. Also constitutes the structural subunit of prolyl 4-hydroxylase. Stabilizes this enzyme and retains it in the ER without contributing to the catalytic activity. Binds UBQLN1.

The protein localises to the endoplasmic reticulum. The protein resides in the endoplasmic reticulum lumen. It is found in the cell membrane. It carries out the reaction Catalyzes the rearrangement of -S-S- bonds in proteins.. In terms of biological role, this multifunctional protein catalyzes the formation, breakage and rearrangement of disulfide bonds. At the cell surface, seems to act as a reductase that cleaves disulfide bonds of proteins attached to the cell. May therefore cause structural modifications of exofacial proteins. Inside the cell, seems to form/rearrange disulfide bonds of nascent proteins. At high concentrations, functions as a chaperone that inhibits aggregation of misfolded proteins. At low concentrations, facilitates aggregation (anti-chaperone activity). Also acts a structural subunit of various enzymes such as prolyl 4-hydroxylase. The protein is Protein disulfide-isomerase (P4HB) of Gallus gallus (Chicken).